The following is a 308-amino-acid chain: Ribosomal RNA small subunit methyltransferase H (308 aa).

Residues G35–H37, D55, F79, D100, and Q107 each bind S-adenosyl-L-methionine.

This sequence belongs to the methyltransferase superfamily. RsmH family.

The protein resides in the cytoplasm. The enzyme catalyses cytidine(1402) in 16S rRNA + S-adenosyl-L-methionine = N(4)-methylcytidine(1402) in 16S rRNA + S-adenosyl-L-homocysteine + H(+). Functionally, specifically methylates the N4 position of cytidine in position 1402 (C1402) of 16S rRNA. The protein is Ribosomal RNA small subunit methyltransferase H of Dechloromonas aromatica (strain RCB).